The primary structure comprises 898 residues: Sodium/hydrogen exchanger 5 (898 aa).

The Cytoplasmic portion of the chain corresponds to 1 to 3 (MLR). The chain crosses the membrane as a helical span at residues 4–24 (VALLLLPGLPLAGVGATEEPT). Over 25 to 47 (QEPGPLGEPPGLALFRWQWHEVE) the chain is Extracellular. Residues 48–68 (APYLVALWILVASLAKIVFHL) traverse the membrane as a helical segment. At 69–75 (SRKVTSL) the chain is on the cytoplasmic side. The helical transmembrane segment at 76-96 (VPESCLLILLGLALGGIVLAV) threads the bilayer. Residues 97–136 (AKKAEYQLEPGTFFLFLLPPIVLDSGYFMPSRLFFDNLGA) lie on the Extracellular side of the membrane. The helical transmembrane segment at 137–157 (ILTYAVVGTLWNAFTTGVALW) threads the bilayer. Residues 158 to 175 (GLQQAGLVAPRVQAGLLD) are Cytoplasmic-facing. A helical membrane pass occupies residues 176-196 (FLLFGSLISAVDPVAVLAVFE). The Extracellular portion of the chain corresponds to 197-202 (EVHVNE). N-linked (GlcNAc...) asparagine glycosylation is present at N201. The chain crosses the membrane as a helical span at residues 203–223 (TLFIIVFGESLLNDAVTVVLY). At 224–248 (KVCNSFVEMGSANVQATDYLKGVAS) the chain is on the cytoplasmic side. Residues 249–269 (LFVVSLGGAAVGLVFAFLLAL) traverse the membrane as a helical segment. Residues 270-278 (TTRFTKRVR) are Extracellular-facing. Residues 279–299 (IIEPLLVFLLAYAAYLTAEMA) form a helical membrane-spanning segment. Residues 300 to 333 (SLSAILAVTMCGLGCKKYVEANISHKSRTAVKYT) are Cytoplasmic-facing. A helical membrane pass occupies residues 334-354 (MKTLASSAETVIFMLLGISAV). Over 355-362 (DSSKWAWD) the chain is Extracellular. A helical membrane pass occupies residues 363 to 383 (SGLVLGTLFFILFFRALGVVL). At 384–400 (QTWVLNQFRLVPLDKID) the chain is on the cytoplasmic side. The chain crosses the membrane as a helical span at residues 401–421 (QVVMSYGGLRGAVAFALVILL). The Extracellular segment spans residues 422–430 (DRTKVPAKD). A helical transmembrane segment spans residues 431 to 451 (YFVATTIVVVFFTVIVQGLTI). The Cytoplasmic segment spans residues 452 to 898 (KPLVKWLRVK…CIQFNRGGRL (447 aa)). Disordered regions lie at residues 660–692 (TKSK…RDLG) and 801–888 (ESLA…NSHW). Residues 662–674 (SKPRPRKTGHKKK) show a composition bias toward basic residues. Residues 856–867 (ESSADIPQQQEL) are compositionally biased toward polar residues.

Belongs to the monovalent cation:proton antiporter 1 (CPA1) transporter (TC 2.A.36) family. As to quaternary structure, interacts with CHP1 and CHP2. Interacts with ARRB2; facilitates the endocytosis of SLC9A5 from the plasma membrane. Interacts with RACK1; this interaction positively regulates SLC9A5 activity and promotes SLC9A5 localization to focal adhesions. Interacts with SCAMP2; this interaction regulates SLC9A5 cell-surface targeting and SLC9A5 activity. Post-translationally, phosphorylated by PRKAA2; promotes its accumulation at the cell surface. Phosphorylated by CSNK2A1 in a manner favoring its beta-arrestin binding and endocytosis. Highly expressed in brain. Strongly expressed in the dentate gyrus.

Its subcellular location is the cell membrane. It localises to the recycling endosome membrane. The protein resides in the cell projection. It is found in the dendritic spine membrane. The protein localises to the synaptic cell membrane. Its subcellular location is the cell junction. It localises to the focal adhesion. The enzyme catalyses Na(+)(in) + H(+)(out) = Na(+)(out) + H(+)(in). Functionally, plasma membrane Na(+)/H(+) antiporter. Mediates the electroneutral exchange of intracellular H(+) ions for extracellular Na(+) in 1:1 stoichiometry. Responsible for regulating intracellular pH homeostasis, in particular in neural tissues. Acts as a negative regulator of dendritic spine growth. Plays a role in postsynaptic remodeling and signaling. Can also contribute to organellar pH regulation, with consequences for receptor tyrosine kinase trafficking. The chain is Sodium/hydrogen exchanger 5 (Slc9a5) from Rattus norvegicus (Rat).